The primary structure comprises 131 residues: Large ribosomal subunit protein bL12 (131 aa).

The protein belongs to the bacterial ribosomal protein bL12 family. As to quaternary structure, homodimer. Part of the ribosomal stalk of the 50S ribosomal subunit. Forms a multimeric L10(L12)X complex, where L10 forms an elongated spine to which 2 to 4 L12 dimers bind in a sequential fashion. Binds GTP-bound translation factors.

Forms part of the ribosomal stalk which helps the ribosome interact with GTP-bound translation factors. Is thus essential for accurate translation. The protein is Large ribosomal subunit protein bL12 of Tropheryma whipplei (strain Twist) (Whipple's bacillus).